Consider the following 548-residue polypeptide: 4-methyl-5-nitrocatechol 5-monooxygenase (548 aa).

The protein belongs to the PheA/TfdB FAD monooxygenase family. Monomer. Requires FAD as cofactor.

The catalysed reaction is 4-methyl-5-nitrocatechol + NADPH + O2 = 2-hydroxy-5-methylquinone + nitrite + NADP(+) + H2O + H(+). It catalyses the reaction 4-methyl-5-nitrocatechol + NADH + O2 = 2-hydroxy-5-methylquinone + nitrite + NAD(+) + H2O + H(+). Activated by magnesium or manganese ions. Inhibited by concentrations of 4-methyl-5-nitrocatechol (MNC) above 2 mM. Its function is as follows. Involved in the degradation of 2,4-dinitrotoluene (2,4-DNT). Catalyzes the removal of the nitro group from 4-methyl-5-nitrocatechol (MNC) to yield 2-hydroxy-5-methylquinone. It can use both NADH and NADPH as electron donors, but prefers NADPH. Also able to use 4-nitrocatechol as substrate. This Burkholderia sp protein is 4-methyl-5-nitrocatechol 5-monooxygenase.